The following is a 433-amino-acid chain: Trigger factor (433 aa).

The 86-residue stretch at 163 to 248 (GDVVVLDFAA…VHAVKERRLP (86 aa)) folds into the PPIase FKBP-type domain.

The protein belongs to the FKBP-type PPIase family. Tig subfamily.

It localises to the cytoplasm. The catalysed reaction is [protein]-peptidylproline (omega=180) = [protein]-peptidylproline (omega=0). Its function is as follows. Involved in protein export. Acts as a chaperone by maintaining the newly synthesized protein in an open conformation. Functions as a peptidyl-prolyl cis-trans isomerase. The chain is Trigger factor from Nitratidesulfovibrio vulgaris (strain DP4) (Desulfovibrio vulgaris).